The following is a 186-amino-acid chain: ATP synthase subunit delta (186 aa).

The protein belongs to the ATPase delta chain family. As to quaternary structure, F-type ATPases have 2 components, F(1) - the catalytic core - and F(0) - the membrane proton channel. F(1) has five subunits: alpha(3), beta(3), gamma(1), delta(1), epsilon(1). F(0) has three main subunits: a(1), b(2) and c(10-14). The alpha and beta chains form an alternating ring which encloses part of the gamma chain. F(1) is attached to F(0) by a central stalk formed by the gamma and epsilon chains, while a peripheral stalk is formed by the delta and b chains.

The protein resides in the cell inner membrane. Functionally, f(1)F(0) ATP synthase produces ATP from ADP in the presence of a proton or sodium gradient. F-type ATPases consist of two structural domains, F(1) containing the extramembraneous catalytic core and F(0) containing the membrane proton channel, linked together by a central stalk and a peripheral stalk. During catalysis, ATP synthesis in the catalytic domain of F(1) is coupled via a rotary mechanism of the central stalk subunits to proton translocation. This protein is part of the stalk that links CF(0) to CF(1). It either transmits conformational changes from CF(0) to CF(1) or is implicated in proton conduction. This Azorhizobium caulinodans (strain ATCC 43989 / DSM 5975 / JCM 20966 / LMG 6465 / NBRC 14845 / NCIMB 13405 / ORS 571) protein is ATP synthase subunit delta.